The chain runs to 1997 residues: Receptor-type tyrosine-protein phosphatase beta (1997 aa).

The first 22 residues, 1-22 (MLSHGAGLALWITLSLLQTGLA), serve as a signal peptide directing secretion. 17 consecutive Fibronectin type-III domains span residues 23–111 (EPER…TDPL), 112–207 (PPAR…SPVK), 203–288 (PSPV…VRTA), 291–378 (EVSN…TFPD), 379–471 (KVAN…LAVL), 467–552 (PLAV…KGRT), 556–641 (QVTD…EGRT), 642–729 (VPSS…QERT), 730–829 (VPDK…TLRN), 819–906 (PEPV…GFTV), 909–1001 (AVKN…VQGV), 995–1083 (PASV…EGRT), 1087–1175 (AVTD…VPAS), 1173–1260 (PASV…SRTA), 1260–1356 (APSP…TKPD), 1357–1448 (KIQN…IDRP), and 1458–1554 (NEKD…EMES). Residues 23 to 1621 (EPERCNFTLA…ESEPLFGAIE (1599 aa)) are Extracellular-facing. 16 N-linked (GlcNAc...) asparagine glycosylation sites follow: asparagine 28, asparagine 53, asparagine 75, asparagine 172, asparagine 198, asparagine 267, asparagine 321, asparagine 414, asparagine 421, asparagine 479, asparagine 544, asparagine 574, asparagine 598, asparagine 652, asparagine 721, and asparagine 829. Residues asparagine 1040, asparagine 1096, asparagine 1163, asparagine 1185, asparagine 1212, asparagine 1274, asparagine 1367, asparagine 1470, asparagine 1474, and asparagine 1518 are each glycosylated (N-linked (GlcNAc...) asparagine). Residues 1622 to 1642 (GVSAGLFLIGMLVAVVALLIC) traverse the membrane as a helical segment. The Cytoplasmic segment spans residues 1643–1997 (RQKVSHGRER…YHRDPVYSRH (355 aa)). In terms of domain architecture, Tyrosine-protein phosphatase spans 1703–1963 (LSKEYEELKD…VYLHQCVRDV (261 aa)). Residues aspartate 1870, 1904 to 1910 (CSAGVGR), and glutamine 1948 each bind substrate. Cysteine 1904 serves as the catalytic Phosphocysteine intermediate. Tyrosine 1981 is subject to Phosphotyrosine.

It belongs to the protein-tyrosine phosphatase family. Receptor class 3 subfamily. As to quaternary structure, monomer. Interacts with TEK. Interacts via fibronectin type-III 17 domain with CDH5. Detected in a complex with CNTN1 and NRCAM. Interacts (phosphorylated form) with FYN and GRB2. Interacts with IGFBP2.

The protein localises to the membrane. It carries out the reaction O-phospho-L-tyrosyl-[protein] + H2O = L-tyrosyl-[protein] + phosphate. In terms of biological role, plays an important role in blood vessel remodeling and angiogenesis. Not necessary for the initial formation of blood vessels, but is essential for their maintenance and remodeling. Can induce dephosphorylation of TEK/TIE2, CDH5/VE-cadherin and KDR/VEGFR-2. Regulates angiopoietin-TIE2 signaling in endothelial cells. Acts as a negative regulator of TIE2, and controls TIE2 driven endothelial cell proliferation, which in turn affects blood vessel remodeling during embryonic development and determines blood vessel size during perinatal growth. Essential for the maintenance of endothelial cell contact integrity and for the adhesive function of VE-cadherin in endothelial cells and this requires the presence of plakoglobin. The chain is Receptor-type tyrosine-protein phosphatase beta (PTPRB) from Homo sapiens (Human).